We begin with the raw amino-acid sequence, 535 residues long: Glutamate--cysteine ligase (535 aa).

The protein belongs to the glutamate--cysteine ligase type 1 family. Type 1 subfamily.

It catalyses the reaction L-cysteine + L-glutamate + ATP = gamma-L-glutamyl-L-cysteine + ADP + phosphate + H(+). It functions in the pathway sulfur metabolism; glutathione biosynthesis; glutathione from L-cysteine and L-glutamate: step 1/2. The sequence is that of Glutamate--cysteine ligase from Pseudomonas savastanoi pv. phaseolicola (strain 1448A / Race 6) (Pseudomonas syringae pv. phaseolicola (strain 1448A / Race 6)).